The following is a 705-amino-acid chain: Structure-specific endonuclease subunit SLX1 homolog (705 aa).

Positions 4–90 (RFHCVYLLTS…TASARLRHAI (87 aa)) constitute a GIY-YIG domain. Disordered regions lie at residues 155–192 (RASSPRVGTQQHSQRSSSLQGQADGVATPPLPALDSKG) and 290–323 (ASFASDSDDEDTRRFAPYCPSTGSRTPSPQRVHT). Polar residues-rich tracts occupy residues 160–175 (RVGTQQHSQRSSSLQG) and 310–320 (STGSRTPSPQR). The segment at 446 to 526 (CSLCTLPLQP…PSQPCPCPLC (81 aa)) adopts an SLX1-type zinc-finger fold. Residues 595–604 (KGAGEAPGAA) are compositionally biased toward low complexity. Residues 595–628 (KGAGEAPGAASTVRASTMHVGPARRDAPRVSSPS) form a disordered region.

The protein belongs to the SLX1 family. In terms of assembly, forms a heterodimer with a member of the SLX4 family. It depends on a divalent metal cation as a cofactor.

The protein localises to the nucleus. Catalytic subunit of a heterodimeric structure-specific endonuclease that resolves DNA secondary structures generated during DNA repair and recombination. Has endonuclease activity towards branched DNA substrates, introducing single-strand cuts in duplex DNA close to junctions with ss-DNA. The polypeptide is Structure-specific endonuclease subunit SLX1 homolog (Leishmania infantum).